A 231-amino-acid polypeptide reads, in one-letter code: Phosphoglycolate phosphatase (231 aa).

Residue D9 is the Nucleophile of the active site. Residues D9 and D11 each contribute to the Mg(2+) site. K154 contributes to the substrate binding site. Mg(2+)-binding residues include D177 and D181.

It belongs to the archaeal SPP-like hydrolase family. Mg(2+) is required as a cofactor.

The enzyme catalyses 2-phosphoglycolate + H2O = glycolate + phosphate. Functionally, catalyzes the dephosphorylation of 2-phosphoglycolate. The chain is Phosphoglycolate phosphatase from Pyrococcus furiosus (strain ATCC 43587 / DSM 3638 / JCM 8422 / Vc1).